The primary structure comprises 516 residues: Extracellular endo-inulinase inuB (516 aa).

The signal sequence occupies residues 1-25 (MLNPKVAYMVWMTCLGLTLPSQAQS). Substrate contacts are provided by residues 40 to 43 (WMNE), Gln-59, Trp-67, and 99 to 100 (FT). Glu-43 is an active-site residue. A glycan (N-linked (GlcNAc...) asparagine) is linked at Asn-109. Substrate-binding positions include 175 to 176 (RD) and Glu-233. N-linked (GlcNAc...) asparagine glycans are attached at residues Asn-372, Asn-419, and Asn-424.

Belongs to the glycosyl hydrolase 32 family.

It is found in the secreted. The catalysed reaction is Endohydrolysis of (2-&gt;1)-beta-D-fructosidic linkages in inulin.. Functionally, endo-inulinase involved in utilization of the plant storage polymer inulin, consisting of fructooligosaccharides with a degree of polymerization (DP) value from 2 to 60. The protein is Extracellular endo-inulinase inuB (inuB) of Aspergillus niger.